A 1162-amino-acid polypeptide reads, in one-letter code: Transcription termination factor 2 (1162 aa).

Zn(2+)-binding residues include C6, H9, C32, and C37. The GRF-type zinc-finger motif lies at C6 to P46. 4 disordered regions span residues P97–H116, I142–D358, D388–P407, and L459–V503. Over residues S105–H116 the composition is skewed to polar residues. A compositionally biased stretch (basic and acidic residues) spans I142 to L178. A Glycyl lysine isopeptide (Lys-Gly) (interchain with G-Cter in SUMO2) cross-link involves residue K143. Residues I219–P232 are compositionally biased toward polar residues. The segment covering S233–Q245 has biased composition (low complexity). Residues D246–V258 show a composition bias toward basic and acidic residues. Residues L261 to K274 are compositionally biased toward polar residues. Over residues P323 to G338 the composition is skewed to low complexity. The span at L459–G485 shows a compositional bias: polar residues. A Phosphoserine modification is found at S460. One can recognise a Helicase ATP-binding domain in the interval W583–S786. D596 to T603 contributes to the ATP binding site. The DEAH box signature appears at D737–H740. Residues K871–R890 form a disordered region. Residues G877–F888 are compositionally biased toward polar residues. Phosphoserine occurs at positions 883 and 908. The Helicase C-terminal domain occupies S995–R1157.

This sequence belongs to the SNF2/RAD54 helicase family. As to quaternary structure, interacts with CDC5L. Part of the spliceosome.

The protein resides in the cytoplasm. It localises to the nucleus. In terms of biological role, dsDNA-dependent ATPase which acts as a transcription termination factor by coupling ATP hydrolysis with removal of RNA polymerase II from the DNA template. May contribute to mitotic transcription repression. May also be involved in pre-mRNA splicing. This is Transcription termination factor 2 (TTF2) from Homo sapiens (Human).